Consider the following 261-residue polypeptide: Na(+)-translocating NADH-quinone reductase subunit C (261 aa).

A helical transmembrane segment spans residues 11–31 (LLVALVVCLVSSVFVAGAAVA). FMN phosphoryl threonine is present on T230.

Belongs to the NqrC family. In terms of assembly, composed of six subunits; NqrA, NqrB, NqrC, NqrD, NqrE and NqrF. FMN serves as cofactor.

The protein resides in the cell inner membrane. The enzyme catalyses a ubiquinone + n Na(+)(in) + NADH + H(+) = a ubiquinol + n Na(+)(out) + NAD(+). NQR complex catalyzes the reduction of ubiquinone-1 to ubiquinol by two successive reactions, coupled with the transport of Na(+) ions from the cytoplasm to the periplasm. NqrA to NqrE are probably involved in the second step, the conversion of ubisemiquinone to ubiquinol. This chain is Na(+)-translocating NADH-quinone reductase subunit C, found in Pseudomonas aeruginosa (strain ATCC 15692 / DSM 22644 / CIP 104116 / JCM 14847 / LMG 12228 / 1C / PRS 101 / PAO1).